The sequence spans 168 residues: MANRNDSRNNRRNKDDIEDQLVAVNRITKVVKGGRRMRFAALVVVGDKKGRVGFGTGKAQEVPEAIRKAVEDGKKKMINVPKVGTTIPHEVIGHYGSGNILLKPAEAGSGVAAGGAVRIVMDMAGISDVTSKSLGSNTPINVVRATIDGLKKLRTSEEVNKLRQPERA.

The S5 DRBM domain occupies 17 to 80; the sequence is IEDQLVAVNR…EDGKKKMINV (64 aa).

The protein belongs to the universal ribosomal protein uS5 family. Part of the 30S ribosomal subunit. Contacts proteins S4 and S8.

With S4 and S12 plays an important role in translational accuracy. Functionally, located at the back of the 30S subunit body where it stabilizes the conformation of the head with respect to the body. The protein is Small ribosomal subunit protein uS5 of Lactobacillus helveticus (strain DPC 4571).